Here is a 347-residue protein sequence, read N- to C-terminus: SCA7 domain-containing protein SELMODRAFT_439258 (347 aa).

Positions 1-13 (MCFFLSSLCPVVA) are cleaved as a signal peptide. Positions 77–106 (RAEVGGTGPKVGRPRKLSVYNPREMSDGNP) are disordered. Residues 134–201 (QHLPFTVDDL…NNSRKSQQAD (68 aa)) form the SCA7 domain.

The sequence is that of SCA7 domain-containing protein SELMODRAFT_439258 from Selaginella moellendorffii (Spikemoss).